Consider the following 925-residue polypeptide: Translation initiation factor IF-2 (925 aa).

Residues 190-329 (PAAPTSEAAP…RRRDEREAAV (140 aa)) form a disordered region. Composition is skewed to pro residues over residues 199-209 (PPEPEPTPLPA), 217-238 (PVRPPAPPAPAKPTPAPAPAPR), and 279-288 (RPVPAQPAPQ). The segment covering 289–307 (TPTRSGSGIAKKGAITKAG) has biased composition (low complexity). Residues 320-329 (RRRDEREAAV) are compositionally biased toward basic and acidic residues. Residues 417–589 (VRPPVVTIMG…LLLVADYELE (173 aa)) form the tr-type G domain. Positions 426–433 (GHVDHGKT) are G1. 426-433 (GHVDHGKT) contacts GTP. Residues 451-455 (GITQH) form a G2 region. The tract at residues 476 to 479 (DTPG) is G3. Residues 476 to 480 (DTPGH) and 530 to 533 (NKVD) each bind GTP. Positions 530-533 (NKVD) are G4. A G5 region spans residues 566 to 568 (SAK).

It belongs to the TRAFAC class translation factor GTPase superfamily. Classic translation factor GTPase family. IF-2 subfamily.

Its subcellular location is the cytoplasm. One of the essential components for the initiation of protein synthesis. Protects formylmethionyl-tRNA from spontaneous hydrolysis and promotes its binding to the 30S ribosomal subunits. Also involved in the hydrolysis of GTP during the formation of the 70S ribosomal complex. In Gloeobacter violaceus (strain ATCC 29082 / PCC 7421), this protein is Translation initiation factor IF-2.